Here is a 431-residue protein sequence, read N- to C-terminus: Serine--tRNA ligase (431 aa).

238–240 (TAE) serves as a coordination point for L-serine. 269–271 (RSE) is a binding site for ATP. Residue glutamate 292 participates in L-serine binding. 356–359 (EISS) is an ATP binding site. Serine 391 is a binding site for L-serine.

The protein belongs to the class-II aminoacyl-tRNA synthetase family. Type-1 seryl-tRNA synthetase subfamily. As to quaternary structure, homodimer. The tRNA molecule binds across the dimer.

The protein resides in the cytoplasm. It catalyses the reaction tRNA(Ser) + L-serine + ATP = L-seryl-tRNA(Ser) + AMP + diphosphate + H(+). It carries out the reaction tRNA(Sec) + L-serine + ATP = L-seryl-tRNA(Sec) + AMP + diphosphate + H(+). It participates in aminoacyl-tRNA biosynthesis; selenocysteinyl-tRNA(Sec) biosynthesis; L-seryl-tRNA(Sec) from L-serine and tRNA(Sec): step 1/1. In terms of biological role, catalyzes the attachment of serine to tRNA(Ser). Is also able to aminoacylate tRNA(Sec) with serine, to form the misacylated tRNA L-seryl-tRNA(Sec), which will be further converted into selenocysteinyl-tRNA(Sec). The protein is Serine--tRNA ligase of Bdellovibrio bacteriovorus (strain ATCC 15356 / DSM 50701 / NCIMB 9529 / HD100).